We begin with the raw amino-acid sequence, 193 residues long: CRIB domain-containing protein RIC5 (193 aa).

In terms of domain architecture, CRIB spans 29 to 42 (IGIPTDVKHVAHIG). The segment at 42-193 (GWEGPSATTP…CAGLGSSTGR (152 aa)) is disordered. Residues 55–67 (HDFKPTDQTKTET) show a composition bias toward basic and acidic residues. The span at 90–100 (STGNNSPTESP) shows a compositional bias: polar residues. Residues 123-134 (GSGSESGSGLEL) show a composition bias toward low complexity.

Interacts with ARAC11/ROP1. As to expression, expressed in flowers and pollen.

It localises to the cell membrane. Functionally, functions as a downstream effector of Rho-related GTP binding proteins of the 'Rho of Plants' (ROPs) family. Participates in the propagation of ROP GTPase signals in specific cellular responses. Is involved in pollen tube growth regulation through its interaction with ARAC11/ROP1. This chain is CRIB domain-containing protein RIC5 (RIC5), found in Arabidopsis thaliana (Mouse-ear cress).